Consider the following 565-residue polypeptide: DNA-directed RNA polymerase subunit beta C-terminal section (565 aa).

The protein belongs to the RNA polymerase beta chain family. In terms of assembly, in plastids the minimal PEP RNA polymerase catalytic core is composed of four subunits: alpha, beta, beta', and beta''. When a (nuclear-encoded) sigma factor is associated with the core the holoenzyme is formed, which can initiate transcription.

It is found in the plastid. The protein localises to the chloroplast. The enzyme catalyses RNA(n) + a ribonucleoside 5'-triphosphate = RNA(n+1) + diphosphate. DNA-dependent RNA polymerase catalyzes the transcription of DNA into RNA using the four ribonucleoside triphosphates as substrates. This chain is DNA-directed RNA polymerase subunit beta C-terminal section (rpoB2), found in Tetradesmus obliquus (Green alga).